A 378-amino-acid polypeptide reads, in one-letter code: SPbeta prophage-derived uncharacterized protein YorJ (378 aa).

The sequence is that of SPbeta prophage-derived uncharacterized protein YorJ (yorJ) from Bacillus subtilis (strain 168).